A 251-amino-acid polypeptide reads, in one-letter code: DNA polymerase sliding clamp 2 (251 aa).

This sequence belongs to the PCNA family. As to quaternary structure, heterotrimer. The subunits circularize to form a toroid; DNA passes through its center. Replication factor C (RFC) is required to load the toroid on the DNA.

Sliding clamp subunit that acts as a moving platform for DNA processing. Responsible for tethering the catalytic subunit of DNA polymerase and other proteins to DNA during high-speed replication. The protein is DNA polymerase sliding clamp 2 of Aeropyrum pernix (strain ATCC 700893 / DSM 11879 / JCM 9820 / NBRC 100138 / K1).